The sequence spans 494 residues: Rhamnulokinase (494 aa).

An ATP-binding site is contributed by 18 to 22; sequence ASSGR. Residues Gly-87 and 242-244 each bind substrate; that span reads HDT. Asp-243 serves as the catalytic Proton acceptor. Thr-265 contacts ATP. Asn-302 lines the substrate pocket. Gln-310 serves as a coordination point for ATP. The cysteines at positions 360 and 377 are disulfide-linked. Residue Gly-411 participates in ATP binding.

The protein belongs to the rhamnulokinase family. Requires Mg(2+) as cofactor.

It catalyses the reaction L-rhamnulose + ATP = L-rhamnulose 1-phosphate + ADP + H(+). It functions in the pathway carbohydrate degradation; L-rhamnose degradation; glycerone phosphate from L-rhamnose: step 2/3. Involved in the catabolism of L-rhamnose (6-deoxy-L-mannose). Catalyzes the transfer of the gamma-phosphate group from ATP to the 1-hydroxyl group of L-rhamnulose to yield L-rhamnulose 1-phosphate. The polypeptide is Rhamnulokinase (Enterococcus faecalis (strain ATCC 700802 / V583)).